The sequence spans 135 residues: UPF0299 membrane protein PC1_1498 (135 aa).

The next 4 membrane-spanning stretches (helical) occupy residues 5–25 (FIVC…LLAG), 30–50 (ALLP…FTLL), 63–83 (GCHL…VGVM), and 93–113 (FGPI…VVGF).

It belongs to the UPF0299 family.

The protein resides in the cell inner membrane. The polypeptide is UPF0299 membrane protein PC1_1498 (Pectobacterium carotovorum subsp. carotovorum (strain PC1)).